A 639-amino-acid polypeptide reads, in one-letter code: MIHITLPDGSQRAFPGPVTVAEVAASIGPGLAKAALAGKIGDQLLDTSHRITADCRLSIITDKDDAGLELIRHSTAHLLAYAVKELFPEAQVTIGPVIDNGFYYDFAYQRPFTPDDLVAMEKRMAELAAKDEPVLRRVLPRDAAIAYFKGLGEHYKAEIIAGIPGDEEVSLYREGSFEDLCRGPHVPSTGKLKFFKLMKVAGAYWRGDHRNQMLQRVYGTAWASKEALQQYLTMLEEAEKRDHRKLGRELDLFHIDEHSPGTVFWHPKGWTLWQEVEQYMRRVYRDNGYQEVKGPQILDQGLWEKTGHWDKYRENMFVTESEKRDYALKPMNCPGHIIIFKQGIKSYRDLPLRFGEFGQCHRNEPSGGLHGIMRVRAFTQDDGHIFCTAQQIQSEILAFTALVQKVYRDFGFTDIIYKLATRPEKHIGTEESWDQAEHALAQGLRASGCEFEYLPGEGAFYGPKVEYTLKDALGRQWQCGTIQVDPNMPERLDAEFVGEDGARHRPIMLHRAIVGSLERFIGILLEQHAGALPAWLAPVQLALLNITEAQSDYCREIAAKMQKALSHLGLRLLLDLRNEKITYKIREHSMQKLPYILVAGDKERAAGAVAVRARGHGDLGVMSVDAFIERIADEISTKA.

The TGS domain maps to 1–61 (MIHITLPDGS…TADCRLSIIT (61 aa)). Residues 242-533 (DHRKLGRELD…LLEQHAGALP (292 aa)) form a catalytic region. Positions 333, 384, and 510 each coordinate Zn(2+).

This sequence belongs to the class-II aminoacyl-tRNA synthetase family. Homodimer. Zn(2+) is required as a cofactor.

It is found in the cytoplasm. The catalysed reaction is tRNA(Thr) + L-threonine + ATP = L-threonyl-tRNA(Thr) + AMP + diphosphate + H(+). In terms of biological role, catalyzes the attachment of threonine to tRNA(Thr) in a two-step reaction: L-threonine is first activated by ATP to form Thr-AMP and then transferred to the acceptor end of tRNA(Thr). Also edits incorrectly charged L-seryl-tRNA(Thr). The protein is Threonine--tRNA ligase of Verminephrobacter eiseniae (strain EF01-2).